The sequence spans 284 residues: NADH-cytochrome b5 reductase 1 (284 aa).

The helical transmembrane segment at 7–27 (KLVVVIVIVVVPLLFKFIIGP) threads the bilayer. The region spanning 38 to 142 (NDFQSFPLVE…KGPRGNYHYE (105 aa)) is the FAD-binding FR-type domain. 148-180 (HLGMIAGGTGIAPMYQIMKAIAMDSHDTTKVSL) is an FAD binding site.

Belongs to the flavoprotein pyridine nucleotide cytochrome reductase family. As to quaternary structure, monomer. Component of the 2-(3-amino-3-carboxypropyl)histidine synthase complex composed of DPH1, DPH2, KTI11/DPH3 and a NADH-dependent reductase, predominantly CBR1. Interacts with KTI11/DPH3. Interacts with STE20. Requires FAD as cofactor.

The protein resides in the mitochondrion outer membrane. It catalyses the reaction 2 Fe(III)-[cytochrome b5] + NADH = 2 Fe(II)-[cytochrome b5] + NAD(+) + H(+). It carries out the reaction 2 Fe(3+)-[Dph3] + NADH = 2 Fe(2+)-[Dph3] + NAD(+) + H(+). It participates in protein modification; peptidyl-diphthamide biosynthesis. Competitively inhibited by NAD(+). Inhibited by mercurials such as p-chloromercuribenzoate (PCMB) and HgCl(2). Enzymatic activity increases under anaerobic conditions. Its function is as follows. NADH-dependent reductase for KTI11/DPH3 and cytochrome b5. Required for the first step of diphthamide biosynthesis, a post-translational modification of histidine which occurs in elongation factor 2. DPH1 and DPH2 transfer a 3-amino-3-carboxypropyl (ACP) group from S-adenosyl-L-methionine (SAM) to a histidine residue, the reaction is assisted by a reduction system comprising KTI11/DPH3 and a NADH-dependent reductase, predominantly CBR1. By reducing KTI11/DPH3, also involved in the formation of the tRNA wobble base modification mcm5s 2U (5-methoxycarbonylmethyl-2-thiouridine), mediated by the elongator complex. The cytochrome b5/NADH cytochrome b5 reductase electron transfer system supports the catalytic activity of several sterol biosynthetic enzymes. Plays a role in bud morphology. This is NADH-cytochrome b5 reductase 1 (CBR1) from Saccharomyces cerevisiae (strain YJM789) (Baker's yeast).